The chain runs to 338 residues: GTPase Obg (338 aa).

Residues 1–159 (MKFIDEVTLF…AKLRLELKLM (159 aa)) form the Obg domain. The OBG-type G domain occupies 160–331 (ADVGLLGLPN…LLDEIARRLW (172 aa)). GTP-binding positions include 166–173 (GLPNAGKS), 191–195 (FTTIK), 213–216 (DIPG), 283–286 (TKLD), and 312–314 (SSA). Residues serine 173 and threonine 193 each contribute to the Mg(2+) site.

Belongs to the TRAFAC class OBG-HflX-like GTPase superfamily. OBG GTPase family. In terms of assembly, monomer. Mg(2+) is required as a cofactor.

The protein resides in the cytoplasm. Its function is as follows. An essential GTPase which binds GTP, GDP and possibly (p)ppGpp with moderate affinity, with high nucleotide exchange rates and a fairly low GTP hydrolysis rate. Plays a role in control of the cell cycle, stress response, ribosome biogenesis and in those bacteria that undergo differentiation, in morphogenesis control. This is GTPase Obg from Pelobacter propionicus (strain DSM 2379 / NBRC 103807 / OttBd1).